The primary structure comprises 213 residues: MGKVLTMAMPKGRIFEEAAGLLRQAGYQLPEEFEDSRKLIIDVPEESLRFILAKPMDVTTYVEHGVADVGIAGKDVMLEEARDVYEVLDLNISKCHLAVAGLPGASWGGVAPRVATKYPNVASSYFREQGEQVEIIKLNGSIELAPLIGLADRIVDIVSTGQTLKENGLVETEHICDITSRFIVNPVSYRMKDAVIDEMAQRLARIIEGEETS.

It belongs to the ATP phosphoribosyltransferase family. Short subfamily. Heteromultimer composed of HisG and HisZ subunits.

The protein localises to the cytoplasm. The enzyme catalyses 1-(5-phospho-beta-D-ribosyl)-ATP + diphosphate = 5-phospho-alpha-D-ribose 1-diphosphate + ATP. It functions in the pathway amino-acid biosynthesis; L-histidine biosynthesis; L-histidine from 5-phospho-alpha-D-ribose 1-diphosphate: step 1/9. In terms of biological role, catalyzes the condensation of ATP and 5-phosphoribose 1-diphosphate to form N'-(5'-phosphoribosyl)-ATP (PR-ATP). Has a crucial role in the pathway because the rate of histidine biosynthesis seems to be controlled primarily by regulation of HisG enzymatic activity. This is ATP phosphoribosyltransferase from Bacillus pumilus (strain SAFR-032).